The chain runs to 361 residues: Phospho-N-acetylmuramoyl-pentapeptide-transferase (361 aa).

10 consecutive transmembrane segments (helical) span residues 28–48 (LAVLVTLSLSFLIGPRLIKFL), 74–94 (TMGGIMIILSSCFSTLLLADL), 99–119 (IWITLFGFVSFSIIGFLDDYA), 135–155 (LLLQGIISLIVCILLEYTIDS), 167–187 (SLSMDLGYLYIFFAIFVIVGA), 203–223 (VPIALTAGSFALISYLVGNLI), 236–256 (TGELTIFCASIVGSCLGFLWF), 263–283 (VFMGDTGSLSLGGVLGIISVI), 288–308 (IVLGIVGGLFVIETISVIMQV), and 338–358 (KVVIRFWIISLIFVLIGLSSL).

The protein belongs to the glycosyltransferase 4 family. MraY subfamily. It depends on Mg(2+) as a cofactor.

Its subcellular location is the cell inner membrane. The catalysed reaction is UDP-N-acetyl-alpha-D-muramoyl-L-alanyl-gamma-D-glutamyl-meso-2,6-diaminopimeloyl-D-alanyl-D-alanine + di-trans,octa-cis-undecaprenyl phosphate = di-trans,octa-cis-undecaprenyl diphospho-N-acetyl-alpha-D-muramoyl-L-alanyl-D-glutamyl-meso-2,6-diaminopimeloyl-D-alanyl-D-alanine + UMP. It functions in the pathway cell wall biogenesis; peptidoglycan biosynthesis. Catalyzes the initial step of the lipid cycle reactions in the biosynthesis of the cell wall peptidoglycan: transfers peptidoglycan precursor phospho-MurNAc-pentapeptide from UDP-MurNAc-pentapeptide onto the lipid carrier undecaprenyl phosphate, yielding undecaprenyl-pyrophosphoryl-MurNAc-pentapeptide, known as lipid I. The polypeptide is Phospho-N-acetylmuramoyl-pentapeptide-transferase (Rickettsia bellii (strain OSU 85-389)).